The primary structure comprises 108 residues: Dormancy-associated protein homolog 1 (108 aa).

The disordered stretch occupies residues 28–59; it reads DIKGVGEGSSSKTVAAVAGSPGTPTTPGSARK. Phosphoserine is present on Ser-47. The residue at position 50 (Thr-50) is a Phosphothreonine.

The protein belongs to the DRM1/ARP family. As to expression, expressed mainly in the low bolt.

This Arabidopsis thaliana (Mouse-ear cress) protein is Dormancy-associated protein homolog 1.